A 100-amino-acid chain; its full sequence is Large ribosomal subunit protein uL23 (100 aa).

It belongs to the universal ribosomal protein uL23 family. As to quaternary structure, part of the 50S ribosomal subunit. Contacts protein L29, and trigger factor when it is bound to the ribosome.

Its function is as follows. One of the early assembly proteins it binds 23S rRNA. One of the proteins that surrounds the polypeptide exit tunnel on the outside of the ribosome. Forms the main docking site for trigger factor binding to the ribosome. This chain is Large ribosomal subunit protein uL23, found in Synechococcus sp. (strain CC9311).